The primary structure comprises 144 residues: Snake venom vascular endothelial growth factor toxin cratrin (144 aa).

The first 24 residues, 1-24, serve as a signal peptide directing secretion; the sequence is MAVYLLAVAILFCIQGWPSGTVQG. Residue glutamine 25 is modified to Pyrrolidone carboxylic acid. Intrachain disulfides connect cysteine 38–cysteine 80, cysteine 69–cysteine 115, and cysteine 73–cysteine 117. Residues 119–144 form a disordered region; it reads PRSTVNNGKRKKNPKEGEPRAKFPLV. The segment covering 132–144 has biased composition (basic and acidic residues); the sequence is PKEGEPRAKFPLV.

This sequence belongs to the PDGF/VEGF growth factor family. Snake venom VEGF subfamily. Homodimer; disulfide-linked. Interacts with VEGF receptor-1 (FLT1) with a high affinity, whereas it binds to VEGF receptor-2 (KDR) with a low affinity. Does not bind VEGF receptor-3 (FLT4). Expressed by the venom gland.

Its subcellular location is the secreted. In terms of biological role, snake venom VEGFs that may contribute to venom dispersion and prey subjugation by inducing vascular permeability and hypotension. This protein induces an increase in capillary permeability after intradermal injection, as well as a drastic hypotensive effect after intravenous injection. The hypotension is mediated by nitric oxide (NO), which is produced by VEGF-activated endothelium NO synthase. Also induces angiogenesis in vitro. Like other crotalid VEGFs, this protein interacts with VEGF receptor-1 (FLT1) with a high affinity, whereas it binds to VEGF receptor-2 (KDR) with a low affinity. The polypeptide is Snake venom vascular endothelial growth factor toxin cratrin (Crotalus atrox (Western diamondback rattlesnake)).